We begin with the raw amino-acid sequence, 200 residues long: UPF0316 protein SAUSA300_1892 (200 aa).

3 consecutive transmembrane segments (helical) span residues 8-28, 40-60, and 66-86; these read PWLMVLTIFIINICYVTFLTM, IAASVSFLEVLVYIVGLGLVM, and IQNIIAYAFGFSIGIIVGMKI.

This sequence belongs to the UPF0316 family.

The protein resides in the cell membrane. The sequence is that of UPF0316 protein SAUSA300_1892 from Staphylococcus aureus (strain USA300).